A 140-amino-acid chain; its full sequence is Ergosterol biosynthetic protein 28 homolog (140 aa).

4 consecutive transmembrane segments (helical) span residues 4–24 (FLNVLRSWLVMVSIIAMGNTL), 52–72 (TFGIWTLLSSVIRCLCAIDIH), 79–99 (ITLWTFLLALGHFLSELFVFG), and 105–125 (VGVLAPLMVASFSILGMLVGL).

Belongs to the ERG28 family.

It is found in the endoplasmic reticulum membrane. In Mus musculus (Mouse), this protein is Ergosterol biosynthetic protein 28 homolog.